The chain runs to 1380 residues: Tripeptidyl-peptidase 2 (1380 aa).

Positions 110–619 constitute a Peptidase S8 domain; the sequence is STFIASLMPK…QGLMQVDKAY (510 aa). Catalysis depends on charge relay system residues aspartate 145, histidine 372, and serine 558. The segment at 1099-1143 is disordered; that stretch reads DEKEGKNPKDNPVSYPISYVVPPNKPEEDKKAASAPTCSKSVSER. Low complexity predominate over residues 1110 to 1120; it reads PVSYPISYVVP. 2 coiled-coil regions span residues 1152–1181 and 1238–1300; these read KIKF…KSEY and EDDE…ELTK.

The protein belongs to the peptidase S8 family. As to quaternary structure, assembles into a large oligomeric complex containing two related proteins 153 and 142 kDa that are derived from the single TPP2 gene. The 142 kDa form mainly differs from the 153 kDa form by a truncation at the C-terminal end.

It catalyses the reaction Release of an N-terminal tripeptide from a polypeptide.. Inhibited by alanine-alanine-phenylalanine-chloromethylketone, butabindide and phenylmethanesulfonyl fluoride (PMSF), but not by leupeptin, N-ethylmaleimide, EDTA, MG132 and lactacystin. Serine protease of the proteasome pathway that may function with the 20S proteasome to degrade oxidized proteins generated by environmental stress. In Arabidopsis thaliana (Mouse-ear cress), this protein is Tripeptidyl-peptidase 2 (TPP2).